Consider the following 178-residue polypeptide: Large ribosomal subunit protein uL6 (178 aa).

The protein belongs to the universal ribosomal protein uL6 family. Part of the 50S ribosomal subunit.

In terms of biological role, this protein binds to the 23S rRNA, and is important in its secondary structure. It is located near the subunit interface in the base of the L7/L12 stalk, and near the tRNA binding site of the peptidyltransferase center. This is Large ribosomal subunit protein uL6 from Arthrobacter sp. (strain FB24).